The following is a 489-amino-acid chain: L-arabinose isomerase (489 aa).

Residues E300, E325, H342, and H441 each coordinate Mn(2+).

It belongs to the arabinose isomerase family. Mn(2+) is required as a cofactor.

The enzyme catalyses beta-L-arabinopyranose = L-ribulose. Its pathway is carbohydrate degradation; L-arabinose degradation via L-ribulose; D-xylulose 5-phosphate from L-arabinose (bacterial route): step 1/3. Functionally, catalyzes the conversion of L-arabinose to L-ribulose. This Clostridium beijerinckii (strain ATCC 51743 / NCIMB 8052) (Clostridium acetobutylicum) protein is L-arabinose isomerase.